Reading from the N-terminus, the 190-residue chain is UPF0398 protein LAR_0869 (190 aa).

It belongs to the UPF0398 family.

The polypeptide is UPF0398 protein LAR_0869 (Limosilactobacillus reuteri subsp. reuteri (strain JCM 1112) (Lactobacillus reuteri)).